The sequence spans 319 residues: tRNA-cytidine(32) 2-sulfurtransferase (319 aa).

The PP-loop motif motif lies at 43 to 48; sequence SGGKDS. Residues Cys-118, Cys-121, and Cys-209 each contribute to the [4Fe-4S] cluster site.

This sequence belongs to the TtcA family. As to quaternary structure, homodimer. Mg(2+) serves as cofactor. The cofactor is [4Fe-4S] cluster.

The protein localises to the cytoplasm. The catalysed reaction is cytidine(32) in tRNA + S-sulfanyl-L-cysteinyl-[cysteine desulfurase] + AH2 + ATP = 2-thiocytidine(32) in tRNA + L-cysteinyl-[cysteine desulfurase] + A + AMP + diphosphate + H(+). It participates in tRNA modification. Its function is as follows. Catalyzes the ATP-dependent 2-thiolation of cytidine in position 32 of tRNA, to form 2-thiocytidine (s(2)C32). The sulfur atoms are provided by the cysteine/cysteine desulfurase (IscS) system. This is tRNA-cytidine(32) 2-sulfurtransferase from Neisseria meningitidis serogroup C / serotype 2a (strain ATCC 700532 / DSM 15464 / FAM18).